A 1252-amino-acid chain; its full sequence is Myosin-3 (1252 aa).

In terms of domain architecture, Myosin motor spans 36–715 (VGVSDLTLLS…TLFALENMRD (680 aa)). An ATP-binding site is contributed by 129–136 (GESGAGKT). Position 357 is a phosphoserine (S357). The segment at 404 to 486 (SIGILDIYGF…PGIFAAMNDA (83 aa)) is actin-binding. IQ domains follow at residues 719-739 (YNMA…RIDA) and 740-767 (AIRI…AGDK). The 191-residue stretch at 773-963 (KERRNMSLLG…TILVRHGNPP (191 aa)) folds into the TH1 domain. Disordered regions lie at residues 988-1086 (KTMK…KTSV), 1106-1136 (YSLP…PSEL), and 1203-1252 (INEP…DDDW). Over residues 997–1016 (KRTPQALPTSSLAASAAQAA) the composition is skewed to low complexity. Polar residues-rich tracts occupy residues 1050-1063 (PVRN…NSKV), 1106-1121 (YSLP…TDSY), and 1203-1219 (INEP…NTDL). An SH3 domain is found at 1116-1178 (SQTDSYQAAY…PTSYIVKYNG (63 aa)). The span at 1238–1252 (SEEDISREEDDDDDW) shows a compositional bias: acidic residues.

Belongs to the TRAFAC class myosin-kinesin ATPase superfamily. Myosin family. Post-translationally, phosphorylation of the TEDS site (Ser-357) is required for the polarization of the actin cytoskeleton. Phosphorylation probably activates the myosin-I ATPase activity.

Its subcellular location is the cytoplasm. It localises to the cytoskeleton. The protein localises to the actin patch. In terms of biological role, type-I myosin implicated in the organization of the actin cytoskeleton. Required for proper actin cytoskeleton polarization. At the cell cortex, assembles in patch-like structures together with proteins from the actin-polymerizing machinery and promotes actin assembly. Functions as actin nucleation-promoting factor (NPF) for the Arp2/3 complex. The protein is Myosin-3 (MYO3) of Candida glabrata (strain ATCC 2001 / BCRC 20586 / JCM 3761 / NBRC 0622 / NRRL Y-65 / CBS 138) (Yeast).